The sequence spans 273 residues: Proteasome subunit beta (273 aa).

Residues 1–19 show a composition bias toward polar residues; sequence MQESTANKVAANATSSFTE. The segment at 1-23 is disordered; it reads MQESTANKVAANATSSFTEHLQR. The propeptide at 1–50 is removed in mature form; by autocatalysis; the sequence is MQESTANKVAANATSSFTEHLQRDRPELLPFNRSGQGSATAAAPLQVPHA. The active-site Nucleophile is T51.

The protein belongs to the peptidase T1B family. The 20S proteasome core is composed of 14 alpha and 14 beta subunits that assemble into four stacked heptameric rings, resulting in a barrel-shaped structure. The two inner rings, each composed of seven catalytic beta subunits, are sandwiched by two outer rings, each composed of seven alpha subunits. The catalytic chamber with the active sites is on the inside of the barrel. Has a gated structure, the ends of the cylinder being occluded by the N-termini of the alpha-subunits. Is capped by the proteasome-associated ATPase, ARC.

The protein localises to the cytoplasm. The catalysed reaction is Cleavage of peptide bonds with very broad specificity.. Its pathway is protein degradation; proteasomal Pup-dependent pathway. Its activity is regulated as follows. The formation of the proteasomal ATPase ARC-20S proteasome complex, likely via the docking of the C-termini of ARC into the intersubunit pockets in the alpha-rings, may trigger opening of the gate for substrate entry. Interconversion between the open-gate and close-gate conformations leads to a dynamic regulation of the 20S proteasome proteolysis activity. In terms of biological role, component of the proteasome core, a large protease complex with broad specificity involved in protein degradation. This chain is Proteasome subunit beta, found in Pseudarthrobacter chlorophenolicus (strain ATCC 700700 / DSM 12829 / CIP 107037 / JCM 12360 / KCTC 9906 / NCIMB 13794 / A6) (Arthrobacter chlorophenolicus).